A 402-amino-acid polypeptide reads, in one-letter code: Enoyl-[acyl-carrier-protein] reductase [NADH] (402 aa).

NAD(+)-binding positions include 48 to 53 (GASSGY), 74 to 75 (FE), 111 to 112 (DA), and 140 to 141 (LA). Residue tyrosine 226 coordinates substrate. The Proton donor role is filled by tyrosine 236. NAD(+)-binding positions include lysine 245 and 274 to 276 (VVT).

This sequence belongs to the TER reductase family. As to quaternary structure, monomer.

The enzyme catalyses a 2,3-saturated acyl-[ACP] + NAD(+) = a (2E)-enoyl-[ACP] + NADH + H(+). It participates in lipid metabolism; fatty acid biosynthesis. Functionally, involved in the final reduction of the elongation cycle of fatty acid synthesis (FAS II). Catalyzes the reduction of a carbon-carbon double bond in an enoyl moiety that is covalently linked to an acyl carrier protein (ACP). The sequence is that of Enoyl-[acyl-carrier-protein] reductase [NADH] from Xanthomonas campestris pv. campestris (strain 8004).